The sequence spans 180 residues: Der GTPase-activating protein YihI (180 aa).

Disordered regions lie at residues 1-88 and 147-180; these read MTRK…KERR and PEVT…FGKE. Basic and acidic residues-rich tracts occupy residues 18–33, 50–67, 77–88, and 153–163; these read FREK…ARKS, EALD…DPRL, VEKKPTTKKERR, and APVRKGAKTDE. The span at 164–173 shows a compositional bias: acidic residues; the sequence is DLLDQFENMD.

It belongs to the YihI family. Interacts with Der.

A GTPase-activating protein (GAP) that modifies Der/EngA GTPase function. May play a role in ribosome biogenesis. This is Der GTPase-activating protein YihI from Photobacterium profundum (strain SS9).